A 343-amino-acid chain; its full sequence is Fructose-1,6-bisphosphatase class 1 (343 aa).

Mg(2+) is bound by residues Glu91, Asp113, Ile115, and Asp116. Substrate is bound by residues 116–119 (DGSS), Asn210, and Lys276. Glu282 is a binding site for Mg(2+).

Belongs to the FBPase class 1 family. In terms of assembly, homotetramer. The cofactor is Mg(2+).

It localises to the cytoplasm. The enzyme catalyses beta-D-fructose 1,6-bisphosphate + H2O = beta-D-fructose 6-phosphate + phosphate. The protein operates within carbohydrate biosynthesis; gluconeogenesis. This is Fructose-1,6-bisphosphatase class 1 from Parvibaculum lavamentivorans (strain DS-1 / DSM 13023 / NCIMB 13966).